The primary structure comprises 169 residues: Peptidyl-prolyl cis-trans isomerase (169 aa).

One can recognise a PPIase cyclophilin-type domain in the interval 5-168 (FFDMTIGGQP…SEVKIAKCGQ (164 aa)).

It belongs to the cyclophilin-type PPIase family.

It is found in the cytoplasm. The enzyme catalyses [protein]-peptidylproline (omega=180) = [protein]-peptidylproline (omega=0). With respect to regulation, binds cyclosporin A (CsA). CsA mediates some of its effects via an inhibitory action on PPIase. PPIases accelerate the folding of proteins. It catalyzes the cis-trans isomerization of proline imidic peptide bonds in oligopeptides. In Unspecified eudicot DB-1992, this protein is Peptidyl-prolyl cis-trans isomerase.